We begin with the raw amino-acid sequence, 401 residues long: 8-amino-7-oxononanoate synthase (401 aa).

Substrate is bound at residue R24. 111–112 (GF) contributes to the pyridoxal 5'-phosphate binding site. H137 lines the substrate pocket. Residues S183, H211, and T240 each contribute to the pyridoxal 5'-phosphate site. K243 carries the N6-(pyridoxal phosphate)lysine modification. T357 is a substrate binding site.

The protein belongs to the class-II pyridoxal-phosphate-dependent aminotransferase family. BioF subfamily. Homodimer. Requires pyridoxal 5'-phosphate as cofactor.

It catalyses the reaction 6-carboxyhexanoyl-[ACP] + L-alanine + H(+) = (8S)-8-amino-7-oxononanoate + holo-[ACP] + CO2. It functions in the pathway cofactor biosynthesis; biotin biosynthesis. Catalyzes the decarboxylative condensation of pimeloyl-[acyl-carrier protein] and L-alanine to produce 8-amino-7-oxononanoate (AON), [acyl-carrier protein], and carbon dioxide. This is 8-amino-7-oxononanoate synthase from Xylella fastidiosa (strain 9a5c).